A 125-amino-acid chain; its full sequence is Ribosome-binding factor A (125 aa).

The protein belongs to the RbfA family. Monomer. Binds 30S ribosomal subunits, but not 50S ribosomal subunits or 70S ribosomes.

The protein localises to the cytoplasm. In terms of biological role, one of several proteins that assist in the late maturation steps of the functional core of the 30S ribosomal subunit. Associates with free 30S ribosomal subunits (but not with 30S subunits that are part of 70S ribosomes or polysomes). Required for efficient processing of 16S rRNA. May interact with the 5'-terminal helix region of 16S rRNA. This is Ribosome-binding factor A from Desulfitobacterium hafniense (strain DSM 10664 / DCB-2).